The sequence spans 348 residues: Putative S-adenosyl-L-methionine-dependent methyltransferase Mb3432 (348 aa).

S-adenosyl-L-methionine-binding positions include D171 and D200 to L201.

Belongs to the UPF0677 family.

Its function is as follows. Exhibits S-adenosyl-L-methionine-dependent methyltransferase activity. This is Putative S-adenosyl-L-methionine-dependent methyltransferase Mb3432 from Mycobacterium bovis (strain ATCC BAA-935 / AF2122/97).